We begin with the raw amino-acid sequence, 35 residues long: NEVCPPGECQQYCCDLRKCKCINLSFYGLTCNCDS.

In terms of processing, contains 4 disulfide bonds. In terms of tissue distribution, expressed by the venom duct.

Its subcellular location is the secreted. The protein is Augerpeptide hheTx4 of Hastula hectica (Sea snail).